The primary structure comprises 140 residues: uncharacterized protein (140 aa).

3 helical membrane passes run 42–62, 65–85, and 96–116; these read AFLFNFLPLLLLLAFLDIFAS, ASFLAAVLIKILVKSVFSALG, and RASDCLAALEFFDIFLAMLCF.

It localises to the membrane. This is an uncharacterized protein from Saccharomyces cerevisiae (strain ATCC 204508 / S288c) (Baker's yeast).